We begin with the raw amino-acid sequence, 84 residues long: Cell division topological specificity factor (84 aa).

Belongs to the MinE family.

Prevents the cell division inhibition by proteins MinC and MinD at internal division sites while permitting inhibition at polar sites. This ensures cell division at the proper site by restricting the formation of a division septum at the midpoint of the long axis of the cell. This chain is Cell division topological specificity factor, found in Hydrogenovibrio crunogenus (strain DSM 25203 / XCL-2) (Thiomicrospira crunogena).